We begin with the raw amino-acid sequence, 259 residues long: Bisphosphoglycerate mutase (259 aa).

Residue Ser2 is modified to N-acetylserine. Substrate contacts are provided by residues 10–17 (RHGEGAWN), 23–24 (CS), Arg62, 89–92 (ERHY), Arg100, and 116–117 (RR). His11 (tele-phosphohistidine intermediate) is an active-site residue. Residue Glu89 is the Proton donor/acceptor of the active site. Residue Thr122 is modified to Phosphothreonine. 189 to 190 (GN) is a substrate binding site.

The protein belongs to the phosphoglycerate mutase family. BPG-dependent PGAM subfamily. As to quaternary structure, homodimer. Expressed in red blood cells.

The catalysed reaction is (2R)-3-phospho-glyceroyl phosphate = (2R)-2,3-bisphosphoglycerate + H(+). It catalyses the reaction (2R)-2-phosphoglycerate = (2R)-3-phosphoglycerate. Its activity is regulated as follows. At alkaline pH BPGM favors the synthase reaction; however, at lower pH the phosphatase reaction is dominant. Inhibited by citrate. Functionally, plays a major role in regulating hemoglobin oxygen affinity by controlling the levels of its allosteric effector 2,3-bisphosphoglycerate (2,3-BPG). Also exhibits mutase (EC 5.4.2.11) activity. The protein is Bisphosphoglycerate mutase (BPGM) of Oryctolagus cuniculus (Rabbit).